A 59-amino-acid polypeptide reads, in one-letter code: Light-harvesting protein B-800-850 alpha chain E (59 aa).

Residues Met1–Lys11 lie on the Cytoplasmic side of the membrane. The chain crosses the membrane as a helical span at residues Pro12–Leu35. An a bacteriochlorophyll-binding site is contributed by His31. Topologically, residues Ser36–Gly59 are periplasmic.

Belongs to the antenna complex alpha subunit family. The core complex is formed by different alpha and beta chains, binding bacteriochlorophyll molecules, and arranged most probably in tetrameric structures disposed around the reaction center. The non-pigmented gamma chains may constitute additional components.

Its subcellular location is the cell inner membrane. Its function is as follows. Antenna complexes are light-harvesting systems, which transfer the excitation energy to the reaction centers. The chain is Light-harvesting protein B-800-850 alpha chain E (pucAE) from Rhodopseudomonas palustris (strain ATCC BAA-98 / CGA009).